The primary structure comprises 306 residues: Ornithine carbamoyltransferase (306 aa).

Residues 53–56, Gln-80, Arg-104, and 131–134 each bind carbamoyl phosphate; these read STRT and HPCQ. L-ornithine contacts are provided by residues Asn-162, Asp-219, and 223 to 224; that span reads SM. Carbamoyl phosphate is bound by residues 259–260 and Arg-287; that span reads CL.

It belongs to the aspartate/ornithine carbamoyltransferase superfamily. OTCase family.

The protein localises to the cytoplasm. It catalyses the reaction carbamoyl phosphate + L-ornithine = L-citrulline + phosphate + H(+). It participates in amino-acid biosynthesis; L-arginine biosynthesis; L-arginine from L-ornithine and carbamoyl phosphate: step 1/3. Reversibly catalyzes the transfer of the carbamoyl group from carbamoyl phosphate (CP) to the N(epsilon) atom of ornithine (ORN) to produce L-citrulline. The chain is Ornithine carbamoyltransferase from Pseudomonas syringae pv. tomato (strain ATCC BAA-871 / DC3000).